Consider the following 188-residue polypeptide: Transmembrane protein 160 (188 aa).

The N-terminal 96 residues, 1-96 (MGGGWWWARA…ISFMQSDMGR (96 aa)), are a transit peptide targeting the mitochondrion. The segment at 24-52 (PPQRPRSGGARGSFAPGHGPRAGASPPPV) is disordered. At Ser48 the chain carries Phosphoserine. 2 helical membrane-spanning segments follow: residues 102 to 122 (FFLLGGLCVVWGSASYAVGLA) and 135 to 155 (AAVGAGAVLAASLLWACAVGL). Positions 168–188 (PEDDGTASAEGPDEAGRPPPE) are disordered.

Belongs to the TMEM160 family.

The protein resides in the mitochondrion inner membrane. This chain is Transmembrane protein 160, found in Homo sapiens (Human).